A 526-amino-acid polypeptide reads, in one-letter code: Secreted triacylglycerol lipase LIP4 (526 aa).

The first 26 residues, 1–26 (MVRLSYVRFGVAWCIAIIIVSGFSNA), serve as a signal peptide directing secretion. A glycan (N-linked (GlcNAc...) asparagine) is linked at Asn-186. Ser-195 serves as the catalytic Nucleophile. N-linked (GlcNAc...) asparagine glycosylation occurs at Asn-228. Active-site residues include Asp-342 and His-376. Residue Asn-377 is glycosylated (N-linked (GlcNAc...) asparagine). Residues 412 to 526 (TGPSASSSAG…TMPAPPLMER (115 aa)) form a disordered region. Composition is skewed to low complexity over residues 413–423 (GPSASSSAGGP) and 430–457 (TGGH…HAPA). Asn-462 carries an N-linked (GlcNAc...) asparagine glycan. The segment covering 480–490 (PSTGATSPAPS) has biased composition (low complexity). Positions 516–526 (RTMPAPPLMER) are enriched in pro residues.

The protein belongs to the AB hydrolase superfamily. Lipase family. Class Lip subfamily.

Its subcellular location is the secreted. The catalysed reaction is a triacylglycerol + H2O = a diacylglycerol + a fatty acid + H(+). It catalyses the reaction a monoacylglycerol + H2O = glycerol + a fatty acid + H(+). The enzyme catalyses a diacylglycerol + H2O = a monoacylglycerol + a fatty acid + H(+). Secreted lipase that hydrolyzes acylglycerol lipids such as triacylglycerols and consequently releases free fatty acid. Can hydrolyze 4-nitrophenyl palmitate to release 4-nitrophenol and palmitoic acid. Due to an absence of fatty acid synthase genes in Malassezia species, secretory lipases are essential for the yeast to generate free fatty acids from degradation of sebum and assimilate them as lipid sources for growth. Plays important roles not only in lipid metabolism but also in the immune response of host cells and pathogenesis. The protein is Secreted triacylglycerol lipase LIP4 of Malassezia furfur (Pityriasis versicolor infection agent).